A 66-amino-acid chain; its full sequence is Sarcoplasmic/endoplasmic reticulum calcium ATPase regulator ARLN (66 aa).

Met1 is subject to N-acetylmethionine. The disordered stretch occupies residues 1-38 (MEVDVPGVDGRDGLRERRGLSEGGRQNLDVRPQSGANG). Residues 9-20 (DGRDGLRERRGL) show a composition bias toward basic and acidic residues. The chain crosses the membrane as a helical span at residues 45–65 (WLDLWLFIFFDVVVFLFVYFL).

Homooligomer. Can also form heterooligomers with other sarcoplasmic/endoplasmic reticulum calcium ATPase (SERCA) regulators ERLN, PLN, SLN and STRIT1/DWORF. Monomer. Interacts as a monomer with ATP2A2/SERCA2; the interaction results in inhibition of ATP2A2 Ca(2+) affinity.

Its subcellular location is the endoplasmic reticulum membrane. In terms of biological role, inhibits the activity of the calcium ATPases ATP2A2/SERCA2 and ATP2A3/SERCA3 by decreasing their apparent affinity for Ca(2+). The polypeptide is Sarcoplasmic/endoplasmic reticulum calcium ATPase regulator ARLN (ARLN) (Pongo abelii (Sumatran orangutan)).